Here is a 180-residue protein sequence, read N- to C-terminus: Adenine phosphoribosyltransferase (180 aa).

Ala-2 is modified (N-acetylalanine). Phosphoserine is present on residues Ser-15 and Ser-30. Phosphotyrosine is present on Tyr-60. Ser-66 is subject to Phosphoserine. Residue Lys-114 is modified to N6-acetyllysine. Phosphothreonine is present on Thr-135.

It belongs to the purine/pyrimidine phosphoribosyltransferase family. Homodimer.

It localises to the cytoplasm. It catalyses the reaction AMP + diphosphate = 5-phospho-alpha-D-ribose 1-diphosphate + adenine. The protein operates within purine metabolism; AMP biosynthesis via salvage pathway; AMP from adenine: step 1/1. Its function is as follows. Catalyzes a salvage reaction resulting in the formation of AMP, that is energically less costly than de novo synthesis. This is Adenine phosphoribosyltransferase from Dipodillus campestris (North African gerbil).